Consider the following 195-residue polypeptide: Coiled-coil domain-containing protein 184 (195 aa).

The stretch at 39-68 (GMKELMEHLKAQLQALFEDVRAMRGALDEQ) forms a coiled coil. Residues 98–175 (RQGGLGVVGN…AGLLGGDGPL (78 aa)) are disordered. A compositionally biased stretch (acidic residues) spans 135–146 (PEDEEDDDEEEK).

The sequence is that of Coiled-coil domain-containing protein 184 (CCDC184) from Bos taurus (Bovine).